The following is a 294-amino-acid chain: Glycine N-acyltransferase-like protein 2 (294 aa).

Lys-19 is subject to N6-acetyllysine.

It belongs to the glycine N-acyltransferase family. Post-translationally, acetylation at Lys-19 drastically decreases the production of N-oleoyl and N-arachidonoyl glycines. Expressed at highest levels in salivary gland and trachea. Also detected in thyroid gland, spinal cord, prostate, lung and fetal brain.

The protein resides in the endoplasmic reticulum. The catalysed reaction is an acyl-CoA + glycine = an N-acylglycine + CoA + H(+). The enzyme catalyses (9Z)-hexadecenoyl-CoA + glycine = N-(9Z-hexadecenoyl)-glycine + CoA + H(+). It carries out the reaction octadecanoyl-CoA + glycine = N-octadecanoylglycine + CoA + H(+). It catalyses the reaction (5Z,8Z,11Z,14Z)-eicosatetraenoyl-CoA + glycine = N-(5Z,8Z,11Z,14Z)-eicosatetraenoyl-glycine + CoA + H(+). The catalysed reaction is (9Z)-octadecenoyl-CoA + glycine = N-(9Z-octadecenoyl)glycine + CoA + H(+). The enzyme catalyses octanoyl-CoA + glycine = N-octanoylglycine + CoA + H(+). It carries out the reaction decanoyl-CoA + glycine = N-decanoylglycine + CoA + H(+). It catalyses the reaction tetradecanoyl-CoA + glycine = N-tetradecanoylglycine + CoA + H(+). The catalysed reaction is dodecanoyl-CoA + glycine = N-dodecanoylglycine + CoA + H(+). The enzyme catalyses (9Z,12Z)-octadecadienoyl-CoA + glycine = N-(9Z,12Z-octadecadienoyl)-glycine + CoA + H(+). It carries out the reaction a fatty acyl-CoA + glycine = an N-(fatty acyl)-glycine + CoA + H(+). Functionally, mitochondrial acyltransferase which transfers the acyl group to the N-terminus of glycine. Conjugates numerous substrates, such as arachidonoyl-CoA and saturated medium and long-chain acyl-CoAs ranging from chain-length C8:0-CoA to C18:0-CoA, to form a variety of N-acylglycines. Shows a preference for monounsaturated fatty acid oleoyl-CoA (C18:1-CoA) as an acyl donor. Does not exhibit any activity toward C22:6-CoA and chenodeoxycholoyl-CoA, nor toward serine or alanine. The protein is Glycine N-acyltransferase-like protein 2 of Homo sapiens (Human).